The following is a 166-amino-acid chain: Small ribosomal subunit protein uS5 (166 aa).

Residues 11–74 enclose the S5 DRBM domain; that stretch reads LQEKLIAVNR…EKARRNMINV (64 aa).

The protein belongs to the universal ribosomal protein uS5 family. Part of the 30S ribosomal subunit. Contacts proteins S4 and S8.

Its function is as follows. With S4 and S12 plays an important role in translational accuracy. In terms of biological role, located at the back of the 30S subunit body where it stabilizes the conformation of the head with respect to the body. The protein is Small ribosomal subunit protein uS5 of Cronobacter sakazakii (strain ATCC BAA-894) (Enterobacter sakazakii).